The chain runs to 148 residues: Hydrogenase expression/formation protein HoxO (148 aa).

Positions 128–148 (IPVLSPESGTPSCSPMETSES) are disordered. A compositionally biased stretch (polar residues) spans 134–148 (ESGTPSCSPMETSES).

This sequence belongs to the HupG/HyaE family.

The sequence is that of Hydrogenase expression/formation protein HoxO (hoxO) from Azotobacter vinelandii.